The sequence spans 1169 residues: Chromosome partition protein Smc (1169 aa).

32 to 39 contacts ATP; it reads PNGCGKSN. 2 coiled-coil regions span residues 170–265 and 307–481; these read ISKY…TGEE and IRHT…ERLN. Residues 525-620 enclose the SMC hinge domain; sequence DRLGEKIEVA…CASDPAEAAE (96 aa). Coiled coils occupy residues 656–914 and 985–1014; these read ALAR…MKLA and RYLEEQDRDLTESLATLEQAIEKIDRECRA.

The protein belongs to the SMC family. As to quaternary structure, homodimer.

It localises to the cytoplasm. Functionally, required for chromosome condensation and partitioning. This Methylococcus capsulatus (strain ATCC 33009 / NCIMB 11132 / Bath) protein is Chromosome partition protein Smc.